The sequence spans 834 residues: Periplasmic nitrate reductase (834 aa).

A signal peptide (tat-type signal) is located at residues 1-32 (MTEPKIDRRQLLKLEAAAIAAAAAGMPTVARA). Residues 44–100 (LKWDKAACRFCGTGCSVMVATKDNRVVATHGDIKAEVNRGLNCVKGYFLSKIMYGHD) form the 4Fe-4S Mo/W bis-MGD-type domain. C51, C54, C58, and C86 together coordinate [4Fe-4S] cluster. Mo-bis(molybdopterin guanine dinucleotide)-binding positions include K88, Q155, N180, C184, 217 to 224 (WGSNMAEM), 248 to 252 (STFEH), 267 to 269 (QTD), M378, Q382, N488, 514 to 515 (SD), K537, D564, and 724 to 733 (TGRVVEHWHS). W800 provides a ligand contact to substrate. 2 residues coordinate Mo-bis(molybdopterin guanine dinucleotide): N808 and K825.

Belongs to the prokaryotic molybdopterin-containing oxidoreductase family. NasA/NapA/NarB subfamily. Component of the periplasmic nitrate reductase NapAB complex composed of NapA and NapB. Requires [4Fe-4S] cluster as cofactor. It depends on Mo-bis(molybdopterin guanine dinucleotide) as a cofactor. In terms of processing, predicted to be exported by the Tat system. The position of the signal peptide cleavage has not been experimentally proven.

It is found in the periplasm. It carries out the reaction 2 Fe(II)-[cytochrome] + nitrate + 2 H(+) = 2 Fe(III)-[cytochrome] + nitrite + H2O. Functionally, catalytic subunit of the periplasmic nitrate reductase complex NapAB. Receives electrons from NapB and catalyzes the reduction of nitrate to nitrite. The sequence is that of Periplasmic nitrate reductase from Bradyrhizobium sp. (strain ORS 278).